A 292-amino-acid polypeptide reads, in one-letter code: Seed lectin (292 aa).

Positions methionine 1 to serine 37 are cleaved as a signal peptide. N-linked (GlcNAc...) asparagine glycans are attached at residues asparagine 82 and asparagine 154. The Mn(2+) site is built by aspartate 163 and aspartate 165. Aspartate 165, histidine 167, asparagine 169, and aspartate 172 together coordinate Ca(2+). Residues aspartate 172 and histidine 177 each contribute to the Mn(2+) site. An N-linked (GlcNAc...) asparagine glycan is attached at asparagine 186.

The protein belongs to the leguminous lectin family.

Functionally, mannose/glucose-specific lectin. The polypeptide is Seed lectin (Styphnolobium japonicum (Japanese pagoda tree)).